A 266-amino-acid polypeptide reads, in one-letter code: 3-methyl-2-oxobutanoate hydroxymethyltransferase (266 aa).

D45 and D84 together coordinate Mg(2+). 3-methyl-2-oxobutanoate-binding positions include 45–46, D84, and K113; that span reads DS. Residue E115 participates in Mg(2+) binding. Catalysis depends on E183, which acts as the Proton acceptor.

It belongs to the PanB family. In terms of assembly, homodecamer; pentamer of dimers. Requires Mg(2+) as cofactor.

It localises to the cytoplasm. The catalysed reaction is 3-methyl-2-oxobutanoate + (6R)-5,10-methylene-5,6,7,8-tetrahydrofolate + H2O = 2-dehydropantoate + (6S)-5,6,7,8-tetrahydrofolate. Its pathway is cofactor biosynthesis; (R)-pantothenate biosynthesis; (R)-pantoate from 3-methyl-2-oxobutanoate: step 1/2. Catalyzes the reversible reaction in which hydroxymethyl group from 5,10-methylenetetrahydrofolate is transferred onto alpha-ketoisovalerate to form ketopantoate. The polypeptide is 3-methyl-2-oxobutanoate hydroxymethyltransferase (Coxiella burnetii (strain Dugway 5J108-111)).